The primary structure comprises 111 residues: Ig kappa chain V-III region PC 7940 (111 aa).

Residues Asp-1–Cys-23 are framework-1. A disulfide bridge links Cys-23 with Cys-92. The tract at residues Arg-24–His-38 is complementarity-determining-1. Residues Trp-39–Tyr-53 are framework-2. The complementarity-determining-2 stretch occupies residues Leu-54 to Ser-60. The tract at residues Gly-61 to Cys-92 is framework-3. Residues Gln-93–Thr-101 form a complementarity-determining-3 region. The segment at Phe-102 to Lys-111 is framework-4.

In Mus musculus (Mouse), this protein is Ig kappa chain V-III region PC 7940.